The chain runs to 318 residues: MSRQPIRIGARGSKLSLAQSGLMQARIAAALGAGPGDDIDAFAQLIPIVTSGDRIQDRRLMEIGGKGLFTKEIEEALLDGRIDCAIHSLKDMPAELPPGLVLAAVPEREDPRDAFISHVAERLEDLSKGARLGTASLRRQAQALHVRPDLEIVMLRGNVDTRLAKLERGEADAILLAQSGLNRLGLGHITNSWLDPLAAPPAPGQGALVIETRAEDVDLPWLQAVRCQATTLAVAAERGALYALEGSCRTAVGAHARLDGLILTMIVEALTPDGVQRFRREGSATLSSLDAADQARALGLELGGAVRAEGGPALILTE.

S-(dipyrrolylmethanemethyl)cysteine is present on Cys-248.

Belongs to the HMBS family. Monomer. Requires dipyrromethane as cofactor.

The enzyme catalyses 4 porphobilinogen + H2O = hydroxymethylbilane + 4 NH4(+). The protein operates within porphyrin-containing compound metabolism; protoporphyrin-IX biosynthesis; coproporphyrinogen-III from 5-aminolevulinate: step 2/4. Tetrapolymerization of the monopyrrole PBG into the hydroxymethylbilane pre-uroporphyrinogen in several discrete steps. In Caulobacter sp. (strain K31), this protein is Porphobilinogen deaminase.